A 333-amino-acid chain; its full sequence is PDZ domain-containing protein GIPC1 (333 aa).

Residues 1 to 11 (MPLGLGRRKKA) are compositionally biased toward basic residues. The segment at 1 to 53 (MPLGLGRRKKAPPLVENEEAEPSRSGLGVGEPGPLGGSAAGESQMGLPPPPAA) is disordered. Positions 27–39 (LGVGEPGPLGGSA) are enriched in gly residues. Serine 68 carries the post-translational modification Phosphoserine. The region spanning 133-213 (EVEVFKSEEA…GRTFTLKLTE (81 aa)) is the PDZ domain. Phosphoserine occurs at positions 222, 225, and 232. The disordered stretch occupies residues 223–244 (QRSAGGHPGSGPQLGTGRGTLR). A compositionally biased stretch (gly residues) spans 228-240 (GHPGSGPQLGTGR). A Phosphothreonine modification is found at threonine 242. Position 247 is a phosphoserine (serine 247).

This sequence belongs to the GIPC family. As to quaternary structure, interacts with GLUT1 (C-terminus), ACTN1, KIF1B, MYO6 and PLEKHG5. Interacts with RGS19 C-terminus. Interacts with SDC4/syndecan-4 and SEMA4C/semaphorin-4C. In terms of tissue distribution, widely expressed.

The protein resides in the cytoplasm. The protein localises to the membrane. Inhibits endothelial cell migration (in vitro). May be involved in G protein-linked signaling. This is PDZ domain-containing protein GIPC1 (Gipc1) from Mus musculus (Mouse).